The primary structure comprises 952 residues: GATA zinc finger domain-containing protein 5 (952 aa).

2 disordered regions span residues 1–36 and 138–197; these read MDYQ…DSPS and PTPL…SPKQ. Residues 10–24 show a composition bias toward polar residues; the sequence is QISQEFPTDISTTKS. Positions 148 to 157 are enriched in pro residues; the sequence is SPPPPPPPPA. The segment covering 158-196 has biased composition (low complexity); that stretch reads ATTTTTITTTTTTSAGNSTTKNNNNNNNNNNNNNGKSPK. A GATA-type zinc finger spans residues 241 to 266; sequence CYQCNTSNTPEWRKGPEGPATLCNAC. Disordered regions lie at residues 380–418, 433–478, 634–699, and 732–816; these read MTPS…HEQP, LLSS…GGGG, QNNS…NKNN, and QQQE…LSVN. A compositionally biased stretch (basic residues) spans 393 to 412; sequence KTTKTKPKPKSKSKPGKITH. Residues 445–467 are compositionally biased toward low complexity; the sequence is SSSSSCGTSLNSSLGSSSGTITN. The segment covering 468–478 has biased composition (gly residues); it reads SGGGSSGGGGG. The segment covering 634-653 has biased composition (polar residues); that stretch reads QNNSFSGPNDQNPYVPSVSL. Low complexity-rich tracts occupy residues 654–668, 678–699, and 732–745; these read NSNK…NNNK, NNKN…NKNN, and QQQE…EQQQ. The span at 746-762 shows a compositional bias: polar residues; the sequence is NLSINNSNQTNENEILG. A compositionally biased stretch (low complexity) spans 763 to 814; sequence TTTTTTTSTATIITSQVPMNLSPNSDDNQSSSNYSTLSDSGSSPTDSFSGLS.

The protein is GATA zinc finger domain-containing protein 5 (gtaE) of Dictyostelium discoideum (Social amoeba).